We begin with the raw amino-acid sequence, 330 residues long: Ketol-acid reductoisomerase (NADP(+)) (330 aa).

The 181-residue stretch at 2-182 (ARMYYDADAN…GGTRAGILET (181 aa)) folds into the KARI N-terminal Rossmann domain. Residues 25 to 28 (YGSQ), serine 51, serine 53, and 83 to 86 (DEFQ) contribute to the NADP(+) site. Histidine 108 is an active-site residue. Residue glycine 134 participates in NADP(+) binding. Residues 183–328 (SFREETETDL…KDLRAMFSWL (146 aa)) enclose the KARI C-terminal knotted domain. The Mg(2+) site is built by aspartate 191, glutamate 195, glutamate 227, and glutamate 231. Position 252 (serine 252) interacts with substrate.

The protein belongs to the ketol-acid reductoisomerase family. Requires Mg(2+) as cofactor.

The enzyme catalyses (2R)-2,3-dihydroxy-3-methylbutanoate + NADP(+) = (2S)-2-acetolactate + NADPH + H(+). It catalyses the reaction (2R,3R)-2,3-dihydroxy-3-methylpentanoate + NADP(+) = (S)-2-ethyl-2-hydroxy-3-oxobutanoate + NADPH + H(+). The protein operates within amino-acid biosynthesis; L-isoleucine biosynthesis; L-isoleucine from 2-oxobutanoate: step 2/4. It participates in amino-acid biosynthesis; L-valine biosynthesis; L-valine from pyruvate: step 2/4. Its function is as follows. Involved in the biosynthesis of branched-chain amino acids (BCAA). Catalyzes an alkyl-migration followed by a ketol-acid reduction of (S)-2-acetolactate (S2AL) to yield (R)-2,3-dihydroxy-isovalerate. In the isomerase reaction, S2AL is rearranged via a Mg-dependent methyl migration to produce 3-hydroxy-3-methyl-2-ketobutyrate (HMKB). In the reductase reaction, this 2-ketoacid undergoes a metal-dependent reduction by NADPH to yield (R)-2,3-dihydroxy-isovalerate. This Synechococcus elongatus (strain ATCC 33912 / PCC 7942 / FACHB-805) (Anacystis nidulans R2) protein is Ketol-acid reductoisomerase (NADP(+)).